Here is a 648-residue protein sequence, read N- to C-terminus: Wilms tumor protein 1-interacting protein homolog (648 aa).

Disordered regions lie at residues 27–56 (DGMYGEPNPDMEKTKRMNGSSSTPGNKVYS), 142–291 (SNSL…SPRS), and 306–327 (SPRSSISSHSSRSSRSSRGSMS). Composition is skewed to low complexity over residues 158–171 (SPRSSLASSHSSQD) and 178–192 (PRSSISSPRSSLVSP). 2 stretches are compositionally biased toward polar residues: residues 197–213 (GTSVISPRSSYASTASD) and 220–241 (PRTSLNSYDCGSKPSSNRTSGI). Over residues 252–267 (PRSSTTSPRSSYSDSR) the composition is skewed to low complexity. 3 consecutive LIM zinc-binding domains span residues 437–498 (GICV…SGFQ), 502–561 (EKCF…TVFA), and 562–631 (PKCA…RLKT).

This sequence belongs to the zyxin/ajuba family.

It localises to the cell junction. It is found in the adherens junction. The protein resides in the nucleus. Its function is as follows. May monitor slit diaphragm protein assembly, a specialized adherens junction characteristic of podocytes. In case of podocyte injury, it shuttles into the nucleus and acts as a transcription regulator. Plays a role in the regulation of cell morphology and cytoskeletal organization. Acts as a transcriptional corepressor for snai1 and snai2/slug and plays a role in regulating neural crest development. This chain is Wilms tumor protein 1-interacting protein homolog (wtip), found in Danio rerio (Zebrafish).